The primary structure comprises 599 residues: Sulfite reductase [NADPH] flavoprotein alpha-component (599 aa).

One can recognise a Flavodoxin-like domain in the interval 64-202; that stretch reads ITIISASQTG…AASEWRARVV (139 aa). Residues 70–75, 117–120, and 153–162 contribute to the FMN site; these read SQTGNA, STQG, and LGDSSYEFFC. The 215-residue stretch at 234-448 folds into the FAD-binding FR-type domain; the sequence is DAPLAASLSV…IEHNDNFRLP (215 aa). FAD is bound by residues Thr322, Ala356, 386-389, 404-406, Tyr410, and 419-422; these read RLYS, TVG, and GGAS. NADP(+)-binding positions include 519–520, 525–529, and Asp561; these read SR and KIYVQ. Tyr599 provides a ligand contact to FAD.

The protein belongs to the NADPH-dependent sulphite reductase flavoprotein subunit CysJ family. It in the N-terminal section; belongs to the flavodoxin family. This sequence in the C-terminal section; belongs to the flavoprotein pyridine nucleotide cytochrome reductase family. Alpha(8)-beta(8). The alpha component is a flavoprotein, the beta component is a hemoprotein. FAD is required as a cofactor. Requires FMN as cofactor.

The enzyme catalyses hydrogen sulfide + 3 NADP(+) + 3 H2O = sulfite + 3 NADPH + 4 H(+). Its pathway is sulfur metabolism; hydrogen sulfide biosynthesis; hydrogen sulfide from sulfite (NADPH route): step 1/1. In terms of biological role, component of the sulfite reductase complex that catalyzes the 6-electron reduction of sulfite to sulfide. This is one of several activities required for the biosynthesis of L-cysteine from sulfate. The flavoprotein component catalyzes the electron flow from NADPH -&gt; FAD -&gt; FMN to the hemoprotein component. The polypeptide is Sulfite reductase [NADPH] flavoprotein alpha-component (Escherichia coli O6:H1 (strain CFT073 / ATCC 700928 / UPEC)).